The sequence spans 426 residues: Serine hydroxymethyltransferase (426 aa).

Residues Leu113 and 117–119 contribute to the (6S)-5,6,7,8-tetrahydrofolate site; that span reads GHL. Lys222 carries the post-translational modification N6-(pyridoxal phosphate)lysine. 363–365 contributes to the (6S)-5,6,7,8-tetrahydrofolate binding site; the sequence is SAF.

The protein belongs to the SHMT family. Homodimer. Pyridoxal 5'-phosphate serves as cofactor.

It is found in the cytoplasm. It carries out the reaction (6R)-5,10-methylene-5,6,7,8-tetrahydrofolate + glycine + H2O = (6S)-5,6,7,8-tetrahydrofolate + L-serine. It functions in the pathway one-carbon metabolism; tetrahydrofolate interconversion. It participates in amino-acid biosynthesis; glycine biosynthesis; glycine from L-serine: step 1/1. Functionally, catalyzes the reversible interconversion of serine and glycine with tetrahydrofolate (THF) serving as the one-carbon carrier. This reaction serves as the major source of one-carbon groups required for the biosynthesis of purines, thymidylate, methionine, and other important biomolecules. Also exhibits THF-independent aldolase activity toward beta-hydroxyamino acids, producing glycine and aldehydes, via a retro-aldol mechanism. This Porphyromonas gingivalis (strain ATCC 33277 / DSM 20709 / CIP 103683 / JCM 12257 / NCTC 11834 / 2561) protein is Serine hydroxymethyltransferase.